We begin with the raw amino-acid sequence, 348 residues long: D-erythrose-4-phosphate dehydrogenase (348 aa).

NAD(+)-binding positions include 12–13 and Arg-81; that span reads RI. Residues 154 to 156, Arg-200, 213 to 214, and Arg-236 contribute to the substrate site; these read SCT and TK. Cys-155 functions as the Nucleophile in the catalytic mechanism. An NAD(+)-binding site is contributed by Asn-318.

Belongs to the glyceraldehyde-3-phosphate dehydrogenase family. Epd subfamily. As to quaternary structure, homotetramer.

The protein localises to the cytoplasm. The enzyme catalyses D-erythrose 4-phosphate + NAD(+) + H2O = 4-phospho-D-erythronate + NADH + 2 H(+). The protein operates within cofactor biosynthesis; pyridoxine 5'-phosphate biosynthesis; pyridoxine 5'-phosphate from D-erythrose 4-phosphate: step 1/5. Functionally, catalyzes the NAD-dependent conversion of D-erythrose 4-phosphate to 4-phosphoerythronate. The sequence is that of D-erythrose-4-phosphate dehydrogenase from Salmonella paratyphi B (strain ATCC BAA-1250 / SPB7).